The sequence spans 373 residues: Enoyl-[acyl-carrier-protein] reductase, mitochondrial (373 aa).

The transit peptide at 1 to 53 (MLVSRRLTGARARAPLLASLLEAWCRQGRTTSSYSAFSEPSHVRALVYGNHGD) directs the protein to the mitochondrion. Position 61 is an N6-acetyllysine; alternate (Lys61). Residue Lys61 is modified to N6-succinyllysine; alternate. Residue Tyr94 is the Proton donor of the active site. NADP(+)-binding positions include Asn167, 193–196 (NSGV), and 216–218 (RDR). N6-acetyllysine; alternate is present on residues Lys252 and Lys267. N6-succinyllysine; alternate occurs at positions 252 and 267. Residues 285–288 (YGGM) and 310–312 (FWL) contribute to the NADP(+) site. An N6-succinyllysine modification is found at Lys316. Lys368 contributes to the NADP(+) binding site.

This sequence belongs to the zinc-containing alcohol dehydrogenase family. Quinone oxidoreductase subfamily. As to quaternary structure, homodimer. In terms of assembly, interacts with PPARA in the nucleus and increases its activity.

The protein localises to the mitochondrion. It localises to the cytoplasm. The protein resides in the nucleus. The catalysed reaction is a 2,3-saturated acyl-[ACP] + NADP(+) = a (2E)-enoyl-[ACP] + NADPH + H(+). It carries out the reaction (2E)-butenoyl-[ACP] + NADPH + H(+) = butanoyl-[ACP] + NADP(+). It catalyses the reaction (2E)-hexenoyl-[ACP] + NADPH + H(+) = hexanoyl-[ACP] + NADP(+). The enzyme catalyses (2E)-octenoyl-[ACP] + NADPH + H(+) = octanoyl-[ACP] + NADP(+). The catalysed reaction is (2E)-decenoyl-[ACP] + NADPH + H(+) = decanoyl-[ACP] + NADP(+). It carries out the reaction (2E)-dodecenoyl-[ACP] + NADPH + H(+) = dodecanoyl-[ACP] + NADP(+). It catalyses the reaction (2E)-tetradecenoyl-[ACP] + NADPH + H(+) = tetradecanoyl-[ACP] + NADP(+). The enzyme catalyses (2E)-hexadecenoyl-[ACP] + NADPH + H(+) = hexadecanoyl-[ACP] + NADP(+). Its function is as follows. Catalyzes the NADPH-dependent reduction of trans-2-enoyl thioesters in mitochondrial fatty acid synthesis (fatty acid synthesis type II). Fatty acid chain elongation in mitochondria uses acyl carrier protein (ACP) as an acyl group carrier, but the enzyme accepts both ACP and CoA thioesters as substrates in vitro. Displays a preference for medium-chain over short- and long-chain substrates. May provide the octanoyl chain used for lipoic acid biosynthesis, regulating protein lipoylation and mitochondrial respiratory activity particularly in Purkinje cells. Involved in iron homeostasis; affecting Fe-S cluster assembly and ceramide metabolism. Required for proper morphology and bioenergetic functions of mitochondria. Required for maintenance of neurons. In Rattus norvegicus (Rat), this protein is Enoyl-[acyl-carrier-protein] reductase, mitochondrial (Mecr).